Here is a 335-residue protein sequence, read N- to C-terminus: MRPILLQGHERALTQIRYNRDGDIIFSTAKDQHICAWYAHNGERLGTYHGHQGAIWTVDVDPTTTIIASGAADNTVRLWDVKTGKCLKTWDFNTAVKRVEFNEDATQLLAVTEQRMGFLGTIVVLDINLDVNGPQSDDRALTITCAESKATVAGWSYMSKYIIAGHEDGSVSQYDAKTGELLFNTQVHEPDLQVTDLQWSPDRTYFITASKDKTAKLVNARDLEVMKTYVTDTPLNSASITPKKDFVILGGGQAAMDVTTTSARQGKFEARFYHKIFEEEIGRVRGHFGPLNTVAVDPNGKGYASGGEDGYVRVHQFDKGYFDFTYEVERQARQQ.

WD repeat units follow at residues 8–47, 50–91, 145–184, 189–228, and 286–325; these read GHER…RLGT, GHQG…KTWD, CAES…LLFN, EPDL…VMKT, and GHFG…FDFT.

The protein belongs to the eIF-3 subunit I family. As to quaternary structure, component of the eukaryotic translation initiation factor 3 (eIF-3) complex.

The protein localises to the cytoplasm. Its function is as follows. Component of the eukaryotic translation initiation factor 3 (eIF-3) complex, which is involved in protein synthesis of a specialized repertoire of mRNAs and, together with other initiation factors, stimulates binding of mRNA and methionyl-tRNAi to the 40S ribosome. The eIF-3 complex specifically targets and initiates translation of a subset of mRNAs involved in cell proliferation. The protein is Eukaryotic translation initiation factor 3 subunit I (tif34) of Botryotinia fuckeliana (strain B05.10) (Noble rot fungus).